A 202-amino-acid polypeptide reads, in one-letter code: Imidazoleglycerol-phosphate dehydratase (202 aa).

Belongs to the imidazoleglycerol-phosphate dehydratase family.

It is found in the cytoplasm. It catalyses the reaction D-erythro-1-(imidazol-4-yl)glycerol 3-phosphate = 3-(imidazol-4-yl)-2-oxopropyl phosphate + H2O. It participates in amino-acid biosynthesis; L-histidine biosynthesis; L-histidine from 5-phospho-alpha-D-ribose 1-diphosphate: step 6/9. This chain is Imidazoleglycerol-phosphate dehydratase, found in Rhizobium meliloti (strain 1021) (Ensifer meliloti).